The primary structure comprises 475 residues: Probable UDP-N-acetylglucosamine pyrophosphorylase (475 aa).

The Substrate binding signature appears at 103 to 106 (LAGG). UTP contacts are provided by residues 103 to 106 (LAGG), Lys117, Gln194, and Gly220. A substrate-binding site is contributed by Asn221. UTP is bound at residue Asp251. The Substrate binding motif lies at 301–302 (EY). Lys378 is a binding site for UTP. Ser405 bears the Phosphoserine mark. Residue Lys410 coordinates substrate.

It belongs to the UDPGP type 1 family.

It is found in the cytoplasm. The protein localises to the nucleus. The catalysed reaction is N-acetyl-alpha-D-glucosamine 1-phosphate + UTP + H(+) = UDP-N-acetyl-alpha-D-glucosamine + diphosphate. The protein operates within nucleotide-sugar biosynthesis; UDP-N-acetyl-alpha-D-glucosamine biosynthesis; UDP-N-acetyl-alpha-D-glucosamine from N-acetyl-alpha-D-glucosamine 1-phosphate: step 1/1. The protein is Probable UDP-N-acetylglucosamine pyrophosphorylase (uap1) of Schizosaccharomyces pombe (strain 972 / ATCC 24843) (Fission yeast).